We begin with the raw amino-acid sequence, 216 residues long: 3-keto-L-gulonate-6-phosphate decarboxylase UlaD (216 aa).

Aspartate 11 serves as a coordination point for substrate. Residues glutamate 33 and aspartate 62 each contribute to the Mg(2+) site. Substrate is bound at residue arginine 192.

The protein belongs to the HPS/KGPDC family. KGPDC subfamily. In terms of assembly, homodimer. Requires Mg(2+) as cofactor.

The catalysed reaction is 3-dehydro-L-gulonate 6-phosphate + H(+) = L-xylulose 5-phosphate + CO2. Its pathway is cofactor degradation; L-ascorbate degradation; D-xylulose 5-phosphate from L-ascorbate: step 2/4. In terms of biological role, catalyzes the decarboxylation of 3-keto-L-gulonate-6-P into L-xylulose-5-P. Is involved in the anaerobic L-ascorbate utilization. This Escherichia coli O17:K52:H18 (strain UMN026 / ExPEC) protein is 3-keto-L-gulonate-6-phosphate decarboxylase UlaD.